The sequence spans 98 residues: MAKTKYEVTYIIKPDIDEDSKKALIDRFDKVVTDNGAEELESKDWGKRRFAYEIEKYREGTYHIMTFVAENSEPVDEFGRLSRIDNQILRSMTVKLDK.

This sequence belongs to the bacterial ribosomal protein bS6 family.

In terms of biological role, binds together with bS18 to 16S ribosomal RNA. This Lactobacillus johnsonii (strain CNCM I-12250 / La1 / NCC 533) protein is Small ribosomal subunit protein bS6.